The following is a 1046-amino-acid chain: UDP-N-acetylglucosamine--peptide N-acetylglucosaminyltransferase 110 kDa subunit (1046 aa).

Position 2 is an N-acetylalanine (Ala-2). A phosphoserine; by GSK3-beta; alternate mark is found at Ser-3 and Ser-4. Residues Ser-3 and Ser-4 are each glycosylated (O-linked (GlcNAc) serine; alternate). Ser-20 is subject to Phosphoserine. TPR repeat units follow at residues 21–54 (FQGLAELAHREYQAGDFEAAERHCMQLWRQEPDN), 89–122 (AEAYSNLGNVYKERGQLQEAIEHYRHALRLKPDF), 123–156 (IDGYINLAAALVAAGDMEGAVQAYVSALQYNPDL), 157–190 (YCVRSDLGNLLKALGRLEEAKACYLKAIETQPNF), 191–224 (AVAWSNLGCVFNAQGEIWLAIHHFEKAVTLDPNF), 225–258 (LDAYINLGNVLKEARIFDRAVAAYLRALSLSPNH), 259–292 (AVVHGNLACVYYEQGLIDLAIDTYRRAIELQPHF), 293–326 (PDAYCNLANALKEKGSVAEAEDCYNTALRLCPTH), 327–360 (ADSLNNLANIKREQGNIEEAVRLYRKALEVFPEF), 361–394 (AAAHSNLASVLQQQGKLQEALMHYKEAIRISPTF), 395–428 (ADAYSNMGNTLKEMQDVQGALQCYTRAIQINPAF), and 429–462 (ADAHSNLASIHKDSGNIPEAIASYRTALKLKPDF). Residue Ser-399 is glycosylated (O-linked (GlcNAc) serine; by autocatalysis). Thr-454 carries the phosphothreonine modification. The TPR 13; truncated repeat unit spans residues 463–473 (PDAYCNLAHCL). The short motif at 464-466 (DAY) is the DFP motif element. The Nuclear localization signal motif lies at 487-503 (KKLVSIVADQLEKNRLP). His-508 serves as the catalytic Proton acceptor. Residues Gln-849, Lys-852, 906-908 (APK), 911-914 (HVRR), 930-932 (HTT), and Asp-935 contribute to the UDP site. Phosphotyrosine is present on Tyr-989. Positions 991–1010 (KKIRGKVWKQRISSPLFNTK) are required for phosphatidylinositol 3,4,5-triphosphate binding.

Belongs to the glycosyltransferase 41 family. O-GlcNAc transferase subfamily. As to quaternary structure, monomer; may exist in different oligomerization states in cells. Homotrimer, oligomerizes via TPR repeats 6 and 7. Trimerization is not necessary for activity in vitro, however it increases affinity for UDP-GlcNAc. Component of a THAP1/THAP3-HCFC1-OGT complex. Component of the NSL complex at least composed of MOF/KAT8, KANSL1, KANSL2, KANSL3, MCRS1, PHF20, OGT1/OGT, WDR5 and HCFC1. Found in a complex with KIF5B, RHOT1, RHOT2 and TRAK1. Found in a complex composed of at least SINHCAF, SIN3A, HDAC1, SAP30, RBBP4, OGT and TET1. Component of a complex composed of KMT2E/MLL5, OGT and USP7; the complex stabilizes KMT2E/MLL5, preventing KMT2E/MLL5 ubiquitination and proteasomal-mediated degradation. Interacts (via TPRs 1-6) with SIN3A; the interaction mediates transcriptional repression in parallel with histone deacetylase. Interacts (via TPR 5-6) with TET1, TET2 and TET3. Interacts (via TPR repeats 6 and 7) with ATXN10. Interacts with NSD2. Interacts with PROSER1; this interaction mediates TET2 O-GlcNAcylation and stability by promoting the interaction between OGT and TET2. In terms of processing, ubiquitinated by the SCF(FBXO31) complex, leading to its proteasomal degradation. Phosphorylation on Ser-3 or Ser-4 by GSK3-beta positively regulates its activity. Phosphorylation at Thr-454 by AMPK promotes nuclear localization. Post-translationally, glycosylated via autocatalysis; O-GlcNAcylation at Ser-399 promotes nuclear localization.

It localises to the nucleus. Its subcellular location is the cytoplasm. The enzyme catalyses L-seryl-[protein] + UDP-N-acetyl-alpha-D-glucosamine = 3-O-(N-acetyl-beta-D-glucosaminyl)-L-seryl-[protein] + UDP + H(+). It carries out the reaction L-threonyl-[protein] + UDP-N-acetyl-alpha-D-glucosamine = 3-O-(N-acetyl-beta-D-glucosaminyl)-L-threonyl-[protein] + UDP + H(+). Its pathway is protein modification; protein glycosylation. Its activity is regulated as follows. Subject to product inhibition by UDP. Its function is as follows. Catalyzes the transfer of a single N-acetylglucosamine from UDP-GlcNAc to a serine or threonine residue in cytoplasmic and nuclear proteins resulting in their modification with a beta-linked N-acetylglucosamine (O-GlcNAc). Glycosylates a large and diverse number of proteins including histone H2B, AKT1, AMPK, ATG4B, CAPRIN1, EZH2, FNIP1, GSDMD, KRT7, LMNA, LMNB1, LMNB2, RPTOR, HOXA1, PFKL, KMT2E/MLL5, MAPT/TAU, TET2, RBL2, RET, NOD2 and HCFC1. Can regulate their cellular processes via cross-talk between glycosylation and phosphorylation or by affecting proteolytic processing. Involved in insulin resistance in muscle and adipocyte cells via glycosylating insulin signaling components and inhibiting the 'Thr-308' phosphorylation of AKT1, enhancing IRS1 phosphorylation and attenuating insulin signaling. Involved in glycolysis regulation by mediating glycosylation of 6-phosphofructokinase PFKL, inhibiting its activity. Plays a key role in chromatin structure by mediating O-GlcNAcylation of 'Ser-112' of histone H2B: recruited to CpG-rich transcription start sites of active genes via its interaction with TET proteins (TET1, TET2 or TET3). As part of the NSL complex indirectly involved in acetylation of nucleosomal histone H4 on several lysine residues. O-GlcNAcylation of 'Ser-75' of EZH2 increases its stability, and facilitating the formation of H3K27me3 by the PRC2/EED-EZH2 complex. Stabilizes KMT2E/MLL5 by mediating its glycosylation, thereby preventing KMT2E/MLL5 ubiquitination. Regulates circadian oscillation of the clock genes and glucose homeostasis in the liver. Stabilizes clock proteins BMAL1 and CLOCK through O-glycosylation, which prevents their ubiquitination and subsequent degradation. Promotes the CLOCK-BMAL1-mediated transcription of genes in the negative loop of the circadian clock such as PER1/2 and CRY1/2. O-glycosylates HCFC1 and regulates its proteolytic processing and transcriptional activity. Component of a THAP1/THAP3-HCFC1-OGT complex that is required for the regulation of the transcriptional activity of RRM1. Regulates mitochondrial motility in neurons by mediating glycosylation of TRAK1. Promotes autophagy by mediating O-glycosylation of ATG4B. Acts as a regulator of mTORC1 signaling by mediating O-glycosylation of RPTOR and FNIP1: O-GlcNAcylation of RPTOR in response to glucose sufficiency promotes activation of the mTORC1 complex. This Sus scrofa (Pig) protein is UDP-N-acetylglucosamine--peptide N-acetylglucosaminyltransferase 110 kDa subunit (OGT).